A 385-amino-acid polypeptide reads, in one-letter code: Sulfoquinovose monooxygenase (385 aa).

Residues 366-385 are disordered; that stretch reads AYGRVPSETPATPLGNGERH.

This sequence belongs to the SsuD family. Homodimer.

It carries out the reaction 6-sulfo-D-quinovose + FMNH2 + O2 = 6-dehydro-D-glucose + FMN + sulfite + H2O + 2 H(+). Its function is as follows. Part of the sulfoquinovose monooxygenase (sulfo-SMO) pathway, a D-sulfoquinovose degradation pathway that enables the complete utilization of all carbons within sulfoquinovose (SQ) with concomitant production of inorganic sulfite. Catalyzes the oxidative desulfurization of sulfoquinovose to sulfite and 6-dehydro-D-glucose. Is highly specific for sulfoquinovose and cannot use sulfoquinovosyl glycerol. FMNH(2) is provided by the FMN reductase SmoA. This Agrobacterium fabrum (strain C58 / ATCC 33970) (Agrobacterium tumefaciens (strain C58)) protein is Sulfoquinovose monooxygenase.